Here is a 100-residue protein sequence, read N- to C-terminus: Urease subunit gamma (100 aa).

The protein belongs to the urease gamma subunit family. Heterotrimer of UreA (gamma), UreB (beta) and UreC (alpha) subunits. Three heterotrimers associate to form the active enzyme.

The protein resides in the cytoplasm. It catalyses the reaction urea + 2 H2O + H(+) = hydrogencarbonate + 2 NH4(+). It participates in nitrogen metabolism; urea degradation; CO(2) and NH(3) from urea (urease route): step 1/1. This Kocuria rhizophila (strain ATCC 9341 / DSM 348 / NBRC 103217 / DC2201) protein is Urease subunit gamma.